Reading from the N-terminus, the 814-residue chain is Microbial collagenase (814 aa).

The N-terminal stretch at 1–21 is a signal peptide; the sequence is MELKILSVAIATTLTSTGVFA. Positions 22–75 are excised as a propeptide; sequence LSEPVSQVTEQHAHSAHTHGVEFNRVEYQPTATLPIQPSKATRVQSLESLDESS. Histidine 477 is a Zn(2+) binding site. Glutamate 478 is a catalytic residue. Histidine 481 contributes to the Zn(2+) binding site. The region spanning 609 to 697 is the PKD domain; it reads APNAVITANS…VVISALGGND (89 aa).

It belongs to the peptidase M9A family. Zn(2+) serves as cofactor. Proteolytic cleavage might yield three different active forms.

The protein localises to the secreted. It carries out the reaction Digestion of native collagen in the triple helical region at Xaa-|-Gly bonds. With synthetic peptides, a preference is shown for Gly at P3 and P1', Pro and Ala at P2 and P2', and hydroxyproline, Ala or Arg at P3'.. This chain is Microbial collagenase, found in Vibrio alginolyticus.